The primary structure comprises 1187 residues: Tyrosine-protein phosphatase non-receptor type 14 (1187 aa).

Residues 21–306 enclose the FERM domain; it reads FVTRIRLLDS…TRHKFYKQNK (286 aa). A phosphoserine mark is found at Ser-314, Ser-461, and Ser-486. The segment covering 510-524 has biased composition (polar residues); it reads LVSPSDQRNPKNNVV. Residues 510 to 531 form a disordered region; that stretch reads LVSPSDQRNPKNNVVPSKPGAS. 4 positions are modified to phosphoserine: Ser-591, Ser-593, Ser-594, and Ser-642. Disordered stretches follow at residues 671 to 690 and 787 to 824; these read LREQ…PQLP and KAIS…KKEP. The segment covering 815 to 824 has biased composition (basic and acidic residues); the sequence is SVKERVKKEP. Residue Ser-831 is modified to Phosphoserine. The 272-residue stretch at 909-1180 folds into the Tyrosine-protein phosphatase domain; it reads VFTEYEQIPK…KFVYQVLIQF (272 aa). Residues Asp-1079, 1121–1127, and Gln-1165 contribute to the substrate site; that span reads CSAGVGR. The active-site Phosphocysteine intermediate is Cys-1121.

Belongs to the protein-tyrosine phosphatase family. Non-receptor class subfamily. As to quaternary structure, interacts with FLT4; the interaction is enhanced by stimulation with VEGFC. Interacts (via PPxY motifs) with YAP1 (via WW domains); this interaction leads to the cytoplasmic sequestration of YAP1 and inhibits its transcriptional co-activator activity. Post-translationally, ubiquitinated by the ECS (Elongin BC-CUL2/5-SOCS-box protein)/LRR1 E3 ligase complex and subsequently targeted to proteasomal degradation. As to expression, ubiquitous.

The protein resides in the cytoplasm. It localises to the cytoskeleton. The protein localises to the nucleus. The catalysed reaction is O-phospho-L-tyrosyl-[protein] + H2O = L-tyrosyl-[protein] + phosphate. Protein tyrosine phosphatase which may play a role in the regulation of lymphangiogenesis, cell-cell adhesion, cell-matrix adhesion, cell migration, cell growth and also regulates TGF-beta gene expression, thereby modulating epithelial-mesenchymal transition. Mediates beta-catenin dephosphorylation at adhesion junctions. Acts as a negative regulator of the oncogenic property of YAP, a downstream target of the hippo pathway, in a cell density-dependent manner. May function as a tumor suppressor. The sequence is that of Tyrosine-protein phosphatase non-receptor type 14 (PTPN14) from Homo sapiens (Human).